We begin with the raw amino-acid sequence, 73 residues long: Large ribosomal subunit protein bL31 (73 aa).

This sequence belongs to the bacterial ribosomal protein bL31 family. Type A subfamily. As to quaternary structure, part of the 50S ribosomal subunit.

In terms of biological role, binds the 23S rRNA. In Rhizobium meliloti (strain 1021) (Ensifer meliloti), this protein is Large ribosomal subunit protein bL31.